A 327-amino-acid polypeptide reads, in one-letter code: MEAIKGSDVNVPDAVFAWMLDGRGGVKPLENTDVIDEAHPCWLHLNYVHHDSAQWLATTPLLPNNVRDALAGESTRPRVSRLGEGTLITLRCINGSTDERPDQLVAMRVYMDGRLIVSTRQRKVLALDDVVSDLEEGTGPTDCGGWLVDVCDALTDHSSEFIEQLHDKIIDLEDNLLDQQIPPRGFLALLRKQLIVMRRYMAPQRDVYARLASERMPWMSDDQRRRMQDIADRLGRGLDEIDACIARTGVMADEIAQVMQENLARRTYTMSLMAMVFLPSTFLTGLFGVNLGGIPGGGWQFGFSIFCILLVVLIGGVALWLHRSKWL.

Residues 1 to 273 lie on the Cytoplasmic side of the membrane; that stretch reads MEAIKGSDVN…ARRTYTMSLM (273 aa). Residues 274-294 form a helical membrane-spanning segment; that stretch reads AMVFLPSTFLTGLFGVNLGGI. Topologically, residues 295–300 are periplasmic; that stretch reads PGGGWQ. The chain crosses the membrane as a helical span at residues 301 to 321; it reads FGFSIFCILLVVLIGGVALWL. The Cytoplasmic portion of the chain corresponds to 322–327; the sequence is HRSKWL.

This sequence belongs to the CorA metal ion transporter (MIT) (TC 1.A.35) family.

Its subcellular location is the cell inner membrane. The catalysed reaction is Zn(2+)(out) + H(+)(out) = Zn(2+)(in) + H(+)(in). Its function is as follows. Zinc transporter. Acts as a Zn(2+):proton symporter, which likely mediates zinc ion uptake. This Escherichia coli O6:K15:H31 (strain 536 / UPEC) protein is Zinc transport protein ZntB.